The sequence spans 466 residues: MSVISITDVLAGNFPVNESITIHGWIRTRRDSKAGISFLALHDGSCFDAIQAIVPNELDNYESDVLKLTTGCSVKVTGILVESPGKGQAFEIQATEVEVLGFVEDPDTYPMAAKRHSIEFLREQAHLRPRTNIGGAVTRVRNCLAQAVHRFLHSKGYFWISTPLITGSDCEGAGEMFRVSTLDMENLPRNDEGKVDYNKDFFGKETFLTVSGQLNVETYCNALSKVYTFGPTFRAENSNTTRHLAEFWMVEPEIAFADLSDAADLAEEMLKYVFKAVLEERPDDMAFFQQRVDKTVLDRLNSVINTDFVRLDYTDAITILENCGKKFENQVSWGVDLNSEHERYLAEEHFNGPVVLQNYPKDIKSFYMRLNDDGKTVAAMDILAPGIGEIIGGSQREERLDVLDSRLEEMGLDIADYGWYRDLRRYGTVPHSGFGLGFERLVAYATGMQNVRDVIPFPRTPNNAAF.

Belongs to the class-II aminoacyl-tRNA synthetase family. As to quaternary structure, homodimer.

The protein resides in the cytoplasm. It carries out the reaction tRNA(Asn) + L-asparagine + ATP = L-asparaginyl-tRNA(Asn) + AMP + diphosphate + H(+). The protein is Asparagine--tRNA ligase of Colwellia psychrerythraea (strain 34H / ATCC BAA-681) (Vibrio psychroerythus).